A 489-amino-acid polypeptide reads, in one-letter code: GTPase Der (489 aa).

EngA-type G domains are found at residues 30 to 199 (PVVS…KDKP) and 227 to 403 (FRLA…SRSH). GTP contacts are provided by residues 36 to 43 (GRQNVGKS), 85 to 89 (DTPGL), 151 to 154 (NKAD), 233 to 240 (GKPNSGKS), 280 to 284 (DTAGI), and 345 to 348 (NKWD). One can recognise a KH-like domain in the interval 404 to 488 (RKVSTSELNK…PIRLEFRSDR (85 aa)).

Belongs to the TRAFAC class TrmE-Era-EngA-EngB-Septin-like GTPase superfamily. EngA (Der) GTPase family. In terms of assembly, associates with the 50S ribosomal subunit.

Its function is as follows. GTPase that plays an essential role in the late steps of ribosome biogenesis. This is GTPase Der from Leptospira interrogans serogroup Icterohaemorrhagiae serovar copenhageni (strain Fiocruz L1-130).